We begin with the raw amino-acid sequence, 1143 residues long: MVQRISLKNKLLPDLVEIQRASFKWFLLEGLTEVLEIFPKISDPTSRLELQLFGNEYKIKFPRYSVRQAKNRDKTYSAQIYVPAKLTRKDIDLPSKNQEKNIKSLDLSSTHLQLSAEKQIKNKKYKKRLVFIGDLPIMTNRGTFIVSGTERVIINQIIRSPGIYYKQEIDKNGKQIYSASLISNRGSWLKFEIDPKGEIWIRIDKTHKVNAYIFLRAIGLNKDEIEKGLSKYAFLISASQIYSVKELAKEIGKNNIEEVTDEEALLIVYSKLRPNEPATVAVAKQMLYSRFFDPKRYDLGEVGRYKINKKLGLNIPKTFRVLSPQDILSSIDYLINIKDKNSGNLDDIDHLGNRRVRSVGELLQNQFRVGLNRLERIIRERMMICDIDSLSLSNLINPKPLIASVREFFGSSQLSQFMDQTNPVAELTHKRRISALGPGGFNKDRAGFAVRDLHPSHYGRICPIETPEGPNAGLIGSLATCARVNVFGFIETPFYPVNQGQVIYHNSPVYLTADEEDDFRVAPGDVKVSKQHYIEGDIIPVRYRQEFITTTPTQVDYIAISPIQVISAATSLIPFLEHDDANRALMGSNMQRQAVPLLYPEKPIIGTGLETKIARDSGMVVISRTSGHVNYVSANKIGIQDNSGRTVHYRLKKYYRSNQDTCINQRPIVWVGEKIVVGQTLADGASTDGGEIALGRNILVAYMPWEGYNYEDAFLISERLVYDDLYTSIHIEKYEVECRQTKLGPEEITREIPNVSDNSLKDLDRNGIVVGGSWVEAGDILVGKITPKGEADQLPEGKLLRAIFGEKARDVRDTSLRLPNAAKGRVVKVRVFTRQKGDELPPGTNAMIRVYVAQKRKIQVGDKMAGRHGNKGIISRILPKQDMPYLSDGTPVDIVLNPLGVPSRMNVGQVFECLLGLAGGYLGKRFKIIPFDEMYGAEASRALVNRKLKEASLITSNKWLFNDQHPGKMQVFDGRTGEPFDNPVTVGRAYMLKLVHLVDDKIHARSTGPYSLVTQQPLGGRAQHGGQRLGEMEVWALEAFGAAYTLQELLTVKSDDMQARNEALNAIVKGKPIPKPGTPESFKVLMRELQSLGLDIAVHKLKLFEDGQRRTVEVDLMSDSKDNRVDRSNYDTPPVDDFEQFLY.

It belongs to the RNA polymerase beta chain family. In plastids the minimal PEP RNA polymerase catalytic core is composed of four subunits: alpha, beta, beta', and beta''. When a (nuclear-encoded) sigma factor is associated with the core the holoenzyme is formed, which can initiate transcription.

It is found in the plastid. The protein resides in the chloroplast. It carries out the reaction RNA(n) + a ribonucleoside 5'-triphosphate = RNA(n+1) + diphosphate. Functionally, DNA-dependent RNA polymerase catalyzes the transcription of DNA into RNA using the four ribonucleoside triphosphates as substrates. The polypeptide is DNA-directed RNA polymerase subunit beta (Pyropia yezoensis (Susabi-nori)).